Here is a 379-residue protein sequence, read N- to C-terminus: UPF0754 protein BpOF4_11355 (379 aa).

Helical transmembrane passes span 6–26 and 359–379; these read FIGF…SLAI and LGAL…LFIG.

This sequence belongs to the UPF0754 family.

The protein localises to the cell membrane. The chain is UPF0754 protein BpOF4_11355 from Alkalihalophilus pseudofirmus (strain ATCC BAA-2126 / JCM 17055 / OF4) (Bacillus pseudofirmus).